Here is a 465-residue protein sequence, read N- to C-terminus: Serine/threonine-protein kinase 38 (465 aa).

Residue Ala2 is modified to N-acetylalanine. The tract at residues 62–87 is interaction with S100B; sequence KRLRRSAHARKETEFLRLKRTRLGLE. The residue at position 74 (Thr74) is a Phosphothreonine. Residues 89–382 enclose the Protein kinase domain; the sequence is FESLKVIGRG…VEEIKNNLFF (294 aa). Residues 95-103 and Lys118 contribute to the ATP site; that span reads IGRGAFGEV. Asp212 acts as the Proton acceptor in catalysis. The residue at position 264 (Ser264) is a Phosphoserine. A Phosphoserine; by autocatalysis modification is found at Ser281. A UFM1-interacting motif (UFIM) motif is present at residues 306-311; the sequence is WSLGVI. Positions 383–455 constitute an AGC-kinase C-terminal domain; the sequence is EGVDWEHIRE…KRFEGLTARG (73 aa). Residue Thr444 is modified to Phosphothreonine; by STK24/MST3.

Belongs to the protein kinase superfamily. AGC Ser/Thr protein kinase family. In terms of assembly, homodimeric S100B binds two molecules of STK38. Interacts with MOB1 and MOB2. Interacts with MAP3K1 and MAP3K2 (via the kinase catalytic domain). Forms a tripartite complex with MOBKL1B and STK3/MST2. Interacts with MICAL1; leading to inhibit the protein kinase activity by antagonizing activation by MST1/STK4. Mg(2+) serves as cofactor. ISGylated. Post-translationally, phosphorylated by STK3/MST2 and this is enhanced by MOBKL1B. In terms of tissue distribution, expressed at high levels in spleen, lung, thymus, brain and fat tissue.

The protein localises to the nucleus. It is found in the cytoplasm. The protein resides in the chromosome. The enzyme catalyses L-seryl-[protein] + ATP = O-phospho-L-seryl-[protein] + ADP + H(+). The catalysed reaction is L-threonyl-[protein] + ATP = O-phospho-L-threonyl-[protein] + ADP + H(+). With respect to regulation, activated by binding of S100B which releases autoinhibitory N-lobe interactions, enabling ATP to bind and the autophosphorylation of Ser-281. Thr-444 then undergoes calcium-dependent phosphorylation by STK24/MST3. Interactions between phosphorylated Thr-444 and the N-lobe promote additional structural changes that complete the activation of the kinase. Autoinhibition is also released by the binding of MOB1/MOBKL1A and MOB2/HCCA2 to the N-terminal of STK38. In terms of biological role, serine/threonine-protein kinase that acts as a negative regulator of MAP3K1/2 signaling. Converts MAP3K2 from its phosphorylated form to its non-phosphorylated form and inhibits autophosphorylation of MAP3K2. Acts as an ufmylation 'reader' in a kinase-independent manner: specifically recognizes and binds mono-ufmylated histone H4 in response to DNA damage, promoting the recruitment of SUV39H1 to the double-strand breaks, resulting in ATM activation. In Mus musculus (Mouse), this protein is Serine/threonine-protein kinase 38.